Reading from the N-terminus, the 354-residue chain is Uroporphyrinogen decarboxylase (354 aa).

Substrate-binding positions include 27–31, Asp77, Tyr154, Thr209, and His327; that span reads RQAGR.

Belongs to the uroporphyrinogen decarboxylase family. Homodimer.

Its subcellular location is the cytoplasm. The enzyme catalyses uroporphyrinogen III + 4 H(+) = coproporphyrinogen III + 4 CO2. It functions in the pathway porphyrin-containing compound metabolism; protoporphyrin-IX biosynthesis; coproporphyrinogen-III from 5-aminolevulinate: step 4/4. Functionally, catalyzes the decarboxylation of four acetate groups of uroporphyrinogen-III to yield coproporphyrinogen-III. The sequence is that of Uroporphyrinogen decarboxylase from Escherichia coli (strain UTI89 / UPEC).